The following is a 148-amino-acid chain: Lipoprotein MlpA (148 aa).

Residues 1 to 17 form the signal peptide; that stretch reads MKIINILFCLFLLLLNS. The N-palmitoyl cysteine moiety is linked to residue Cys-18. Cys-18 is lipidated: S-diacylglycerol cysteine. The interval 26-58 is disordered; it reads LKNNAQQTKSRGKRDLTQKEATPEKPKSKEELL. The span at 38–58 shows a compositional bias: basic and acidic residues; the sequence is KRDLTQKEATPEKPKSKEELL.

It belongs to the Multicopy lipoprotein (Mlp) family.

It localises to the cell outer membrane. An outer membrane protein that may participate in pathogenesis. Some human Lyme disease patients have antibodies against this protein. The Mlp proteins probably undergo intragenic recombination, generating new alleles. This chain is Lipoprotein MlpA (mlpA), found in Borreliella burgdorferi (strain ATCC 35210 / DSM 4680 / CIP 102532 / B31) (Borrelia burgdorferi).